The chain runs to 82 residues: Small ribosomal subunit protein bS16 (82 aa).

It belongs to the bacterial ribosomal protein bS16 family.

The protein is Small ribosomal subunit protein bS16 of Cyanothece sp. (strain PCC 7425 / ATCC 29141).